We begin with the raw amino-acid sequence, 256 residues long: Type III pantothenate kinase (256 aa).

ATP is bound at residue 6–13 (DAGNSRIK). Residues tyrosine 90 and 97 to 100 (GSDR) contribute to the substrate site. Aspartate 99 functions as the Proton acceptor in the catalytic mechanism. Threonine 123 serves as a coordination point for ATP. Residue threonine 187 participates in substrate binding.

Belongs to the type III pantothenate kinase family. As to quaternary structure, homodimer. NH4(+) serves as cofactor. The cofactor is K(+).

The protein resides in the cytoplasm. It carries out the reaction (R)-pantothenate + ATP = (R)-4'-phosphopantothenate + ADP + H(+). Its pathway is cofactor biosynthesis; coenzyme A biosynthesis; CoA from (R)-pantothenate: step 1/5. In terms of biological role, catalyzes the phosphorylation of pantothenate (Pan), the first step in CoA biosynthesis. The sequence is that of Type III pantothenate kinase from Burkholderia mallei (strain ATCC 23344).